We begin with the raw amino-acid sequence, 475 residues long: Exodeoxyribonuclease 7 large subunit (475 aa).

The interval 452–475 is disordered; the sequence is DHGLNRSSKSKRIKSKQDDQGTLF. A compositionally biased stretch (basic and acidic residues) spans 466–475; sequence SKQDDQGTLF.

It belongs to the XseA family. In terms of assembly, heterooligomer composed of large and small subunits.

The protein resides in the cytoplasm. The catalysed reaction is Exonucleolytic cleavage in either 5'- to 3'- or 3'- to 5'-direction to yield nucleoside 5'-phosphates.. Its function is as follows. Bidirectionally degrades single-stranded DNA into large acid-insoluble oligonucleotides, which are then degraded further into small acid-soluble oligonucleotides. This is Exodeoxyribonuclease 7 large subunit from Bartonella quintana (strain Toulouse) (Rochalimaea quintana).